The sequence spans 914 residues: MDGAAVGLRVLLGLGLVSLLTLEAMPAAWGLATTGRPRAREKRQAVDTTPDGVLVKSLKVNCKVTSRFAHYIITSQVVNRQPNEAREVAFDVEIPKTAFISDFAITADGNTFIGDIKDKASAWKQYRKAISGENAGLVRTSGRNMEQFTIHITVGAQSKATFQLTYEEVLKRRLTQYDIVIKVKPKQLVQHFEIDVDIFEPQGISKLDAQASFLSKELAAQTIKESFSGKKGHVLFRPTVSQQQQPCPTCSTSWLNGDFKVTYDVNRDKLCDLLVANNYFAHFFAPKNLTNMSKNLVFVIDISGSMEGQKVKQTKEALLKILGDVKPGDSFDLVLFGSRVQSWKGSLVPATQANLQAAQDFVRRFSLAGATNLNGGLLRGIEILNKAQGSHPELSSPASILIMLTDGEPTEGETDRSQILKNVRNAIRGRFPLYNLGFGHDLDFNFLEVMSMENSGWAQRIYEDHDATQQLQGFYNQVANPLLTDVELQYPQDSVLSLTQHRHKQYYDGSEIVVAGRIADHKLSTFKADVRARGERQEFKATCLVDEEEMKKLLRERGHMLENHVERLWAYLTIQELLAKRMKMEGEERANLSSQALKMSLDYQFVTPLTSMTIRGLTDEDGLEPTIDKTPEDSQPLVKVGPRRTFVLSATQPSPTARSSVVSKLPNQVTGVDTDPHFIIYVPQKEDSLCFNINEEPGVILSLVQDPDTGFSVNGQLIGSKPSRPGQHEATYFGRLGISNPPSDFQLEVTPRNITLNPSSGGPVFSWRDQATPQKDGVLVTINKKRNLVVSVEDGATFEIVLHRTWKGSAAHQDFLGFYVLDSSRMSARTRGLLGQFFCPLDFEVSDIRPGSDPMKLDATMRVKNRQLAVTRGLQRDYSKDPRHGTEVSCWFIHNNGAGLIDGVHTDYIVPDIF.

An N-terminal signal peptide occupies residues Met-1–Gly-30. The propeptide occupies Leu-31–Arg-36. The VIT domain occupies Ala-39–Glu-168. A glycan (S-linked (Hex...) cysteine) is linked at Cys-62. Ser-131 is modified (phosphoserine). Asn-288 and Asn-291 each carry an N-linked (GlcNAc...) asparagine glycan. Residues Ser-293–Glu-453 form the VWFA domain. Residues Thr-405 and Thr-410 each carry the phosphothreonine modification. An N-linked (GlcNAc...) asparagine glycan is attached at Asn-591. Thr-656 carries an O-linked (GalNAc...) threonine glycan. Asp-675 carries the post-translational modification Aspartate 1-(chondroitin 4-sulfate)-ester. A propeptide spanning residues Pro-676–Phe-914 is cleaved from the precursor.

Belongs to the ITIH family. I-alpha-I plasma protease inhibitors are assembled from one or two heavy chains (HC) and one light chain, bikunin. Inter-alpha-inhibitor (I-alpha-I) is composed of ITIH1/HC1, ITIH2/HC2 and bikunin. Interacts with TNFAIP6 (via Link and CUB domains). Post-translationally, heavy chains are linked to bikunin via chondroitin 4-sulfate esterified to the alpha-carboxyl of the C-terminal aspartate after propeptide cleavage. The S-linked glycan is composed of two 6-carbon sugars, possibly Glc or Gal.

It is found in the secreted. Its function is as follows. May act as a carrier of hyaluronan in serum or as a binding protein between hyaluronan and other matrix protein, including those on cell surfaces in tissues to regulate the localization, synthesis and degradation of hyaluronan which are essential to cells undergoing biological processes. The protein is Inter-alpha-trypsin inhibitor heavy chain H1 (ITIH1) of Mesocricetus auratus (Golden hamster).